We begin with the raw amino-acid sequence, 73 residues long: Translation initiation factor IF-1 (73 aa).

An S1-like domain is found at 1 to 73 (MPKKDGAIEI…SRGRIVYRYK (73 aa)).

It belongs to the IF-1 family. As to quaternary structure, component of the 30S ribosomal translation pre-initiation complex which assembles on the 30S ribosome in the order IF-2 and IF-3, IF-1 and N-formylmethionyl-tRNA(fMet); mRNA recruitment can occur at any time during PIC assembly.

It localises to the cytoplasm. Its function is as follows. One of the essential components for the initiation of protein synthesis. Stabilizes the binding of IF-2 and IF-3 on the 30S subunit to which N-formylmethionyl-tRNA(fMet) subsequently binds. Helps modulate mRNA selection, yielding the 30S pre-initiation complex (PIC). Upon addition of the 50S ribosomal subunit IF-1, IF-2 and IF-3 are released leaving the mature 70S translation initiation complex. This Frankia alni (strain DSM 45986 / CECT 9034 / ACN14a) protein is Translation initiation factor IF-1.